The chain runs to 160 residues: SsrA-binding protein (160 aa).

The interval 131 to 160 (KKEFDKRHTEKERDSDREIQRAMRTKGKDD) is disordered.

This sequence belongs to the SmpB family.

It is found in the cytoplasm. Functionally, required for rescue of stalled ribosomes mediated by trans-translation. Binds to transfer-messenger RNA (tmRNA), required for stable association of tmRNA with ribosomes. tmRNA and SmpB together mimic tRNA shape, replacing the anticodon stem-loop with SmpB. tmRNA is encoded by the ssrA gene; the 2 termini fold to resemble tRNA(Ala) and it encodes a 'tag peptide', a short internal open reading frame. During trans-translation Ala-aminoacylated tmRNA acts like a tRNA, entering the A-site of stalled ribosomes, displacing the stalled mRNA. The ribosome then switches to translate the ORF on the tmRNA; the nascent peptide is terminated with the 'tag peptide' encoded by the tmRNA and targeted for degradation. The ribosome is freed to recommence translation, which seems to be the essential function of trans-translation. The sequence is that of SsrA-binding protein from Stutzerimonas stutzeri (strain A1501) (Pseudomonas stutzeri).